An 850-amino-acid chain; its full sequence is Ras GTPase-activating protein 2 (850 aa).

The span at 1–24 (MAAAAPAAAAASSEAPAASATAEP) shows a compositional bias: low complexity. Positions 1-32 (MAAAAPAAAAASSEAPAASATAEPEAGDQDSR) are disordered. A2 is subject to N-acetylalanine. C2 domains lie at 20-138 (ATAE…ETWF) and 149-289 (VQGK…QAWY). Residues 372–589 (DKLVPFATAV…IAVKKFLDEI (218 aa)) form the Ras-GAP domain. S555 bears the Phosphoserine mark. One can recognise a PH domain in the interval 604–706 (VHLKEGEMYK…WIDVLCRVSR (103 aa)). Residues 708–744 (NQNRLSFYHPSVYLNGNWLCCQETGENTLGCKPCTAG) form a Btk-type zinc finger. 4 residues coordinate Zn(2+): H716, C727, C728, and C738. The interval 825–850 (HEKYRKKRSSSAKYGSKENPIVGKAS) is disordered.

The protein localises to the cytoplasm. Its subcellular location is the perinuclear region. Its function is as follows. Inhibitory regulator of the Ras-cyclic AMP pathway. Binds inositol tetrakisphosphate (IP4). The sequence is that of Ras GTPase-activating protein 2 (RASA2) from Homo sapiens (Human).